A 210-amino-acid chain; its full sequence is Large ribosomal subunit protein uL3 (210 aa).

The protein belongs to the universal ribosomal protein uL3 family. In terms of assembly, part of the 50S ribosomal subunit. Forms a cluster with proteins L14 and L19.

Its function is as follows. One of the primary rRNA binding proteins, it binds directly near the 3'-end of the 23S rRNA, where it nucleates assembly of the 50S subunit. In Lawsonia intracellularis (strain PHE/MN1-00), this protein is Large ribosomal subunit protein uL3.